The primary structure comprises 463 residues: Asparagine--tRNA ligase (463 aa).

This sequence belongs to the class-II aminoacyl-tRNA synthetase family. As to quaternary structure, homodimer.

Its subcellular location is the cytoplasm. It carries out the reaction tRNA(Asn) + L-asparagine + ATP = L-asparaginyl-tRNA(Asn) + AMP + diphosphate + H(+). The sequence is that of Asparagine--tRNA ligase from Alkaliphilus metalliredigens (strain QYMF).